We begin with the raw amino-acid sequence, 376 residues long: Queuine tRNA-ribosyltransferase (376 aa).

Asp93 (proton acceptor) is an active-site residue. Substrate is bound by residues 93 to 97 (DSGGF), Asp147, Gln190, and Gly217. Positions 248–254 (GVGTPDD) are RNA binding. Asp267 (nucleophile) is an active-site residue. Positions 272-276 (TRSGR) are RNA binding; important for wobble base 34 recognition.

This sequence belongs to the queuine tRNA-ribosyltransferase family. As to quaternary structure, homodimer. Within each dimer, one monomer is responsible for RNA recognition and catalysis, while the other monomer binds to the replacement base PreQ1.

It catalyses the reaction 7-aminomethyl-7-carbaguanine + guanosine(34) in tRNA = 7-aminomethyl-7-carbaguanosine(34) in tRNA + guanine. Its pathway is tRNA modification; tRNA-queuosine biosynthesis. Catalyzes the base-exchange of a guanine (G) residue with the queuine precursor 7-aminomethyl-7-deazaguanine (PreQ1) at position 34 (anticodon wobble position) in tRNAs with GU(N) anticodons (tRNA-Asp, -Asn, -His and -Tyr). Catalysis occurs through a double-displacement mechanism. The nucleophile active site attacks the C1' of nucleotide 34 to detach the guanine base from the RNA, forming a covalent enzyme-RNA intermediate. The proton acceptor active site deprotonates the incoming PreQ1, allowing a nucleophilic attack on the C1' of the ribose to form the product. After dissociation, two additional enzymatic reactions on the tRNA convert PreQ1 to queuine (Q), resulting in the hypermodified nucleoside queuosine (7-(((4,5-cis-dihydroxy-2-cyclopenten-1-yl)amino)methyl)-7-deazaguanosine). The polypeptide is Queuine tRNA-ribosyltransferase (Rhizobium meliloti (strain 1021) (Ensifer meliloti)).